The following is a 472-amino-acid chain: Argininosuccinate lyase (472 aa).

It belongs to the lyase 1 family. Argininosuccinate lyase subfamily.

Its subcellular location is the cytoplasm. It carries out the reaction 2-(N(omega)-L-arginino)succinate = fumarate + L-arginine. It functions in the pathway amino-acid biosynthesis; L-arginine biosynthesis; L-arginine from L-ornithine and carbamoyl phosphate: step 3/3. The polypeptide is Argininosuccinate lyase (Synechococcus sp. (strain CC9902)).